The primary structure comprises 165 residues: MVVAVYPGTFDPLTRGHEDLVRRASSIFDTLVVGVADSRAKKPFFSLEERLKIANEVLGHYPNVKVMGFKGLLKDFVRTNNARVIVRGLRAVSDFEYEFQMAGMNRYLLPDVETMFMTPSDQYQFISGTIVREIAQLGGDVSKFVFPSVEKWLTEKVAAMGGPAA.

Threonine 9 contacts substrate. ATP is bound by residues 9-10 (TF) and histidine 17. Substrate is bound by residues lysine 41, leucine 73, and arginine 87. ATP-binding positions include 88–90 (GLR), glutamate 98, and 123–129 (YQFISGT).

The protein belongs to the bacterial CoaD family. In terms of assembly, homohexamer. Mg(2+) serves as cofactor.

Its subcellular location is the cytoplasm. The catalysed reaction is (R)-4'-phosphopantetheine + ATP + H(+) = 3'-dephospho-CoA + diphosphate. The protein operates within cofactor biosynthesis; coenzyme A biosynthesis; CoA from (R)-pantothenate: step 4/5. Reversibly transfers an adenylyl group from ATP to 4'-phosphopantetheine, yielding dephospho-CoA (dPCoA) and pyrophosphate. This chain is Phosphopantetheine adenylyltransferase, found in Burkholderia vietnamiensis (strain G4 / LMG 22486) (Burkholderia cepacia (strain R1808)).